The following is a 134-amino-acid chain: Large-conductance mechanosensitive channel (134 aa).

Transmembrane regions (helical) follow at residues 16-36 (VIDLAVAVVIGAAFGKIVTAL) and 81-101 (GDFLNTILQFIIIAFAIFIIV).

The protein belongs to the MscL family. Homopentamer.

Its subcellular location is the cell inner membrane. In terms of biological role, channel that opens in response to stretch forces in the membrane lipid bilayer. May participate in the regulation of osmotic pressure changes within the cell. The chain is Large-conductance mechanosensitive channel from Xylella fastidiosa (strain 9a5c).